We begin with the raw amino-acid sequence, 780 residues long: MQDEQDKYLKNIDFYEILSLVSKYVSNPDTVNLLSNQKILKTKESLEKIFSFVSLIRMLFESCKGYPNSFINSLKYPISLLLKENSRVSIENLRDIIVFLDEVLRINLFLHKNSDIKHLNVQILSDLLFLNPELKNLLNELKEHIDVDALELKSGVVKEYDSIEFEIKNLNRRVENQIKKIISLNAEYLTSNFVCYKSNKYTLALKSNFKGKIKGNIISISSSGETFYIEPNDIVNANNRLNYLSLEKERIILKILRNLSAKVHSNIVLLDNLYNNFLYYDSLKARAIYGIKTKGVFPEISNVLNIFDAHHPLLKDSKAITFTPAENRVVIITGPNAGGKTVTLKTIGLLSAMFQFGIPIVVGESSTFKIFDNIFIDIGDEQSISNSLSTFSSHMSNISYILKHTTKDSLVIFDEFCSGTDIDQGQALAISILEYLININSYVLISTHYNALKYFAYTHEGVVNASMRMDLETMQPNYNLIFSIPGESYAFNVASKALIDRSIVIRANEIYSSQKTEINEILEKLIEKEKDLLLIKESMDKKLIQIELQEKELENFYQDLLLREKNIETKLLNEQNEFLKNSRKVLENLVREIKEGNINVAKNKAFISDLEKNVDLKTNKVNSLNNKRNVVADFKIGDKVRIVNSNAKGKIVGISKKKITVNVGAFNVSVSSSEISLENFKEKKENGKNFNFSIDYNKENLLSFTIDIRGMRSVDALDFLNKKIDNIILNGINKFEIIHGKGEGHLMREVHNLLKELKFIRKYYFAHPSDGGSGKTIVEI.

334–341 (GPNAGGKT) is an ATP binding site. The Smr domain occupies 706–780 (IDIRGMRSVD…GGSGKTIVEI (75 aa)).

This sequence belongs to the DNA mismatch repair MutS family. MutS2 subfamily. As to quaternary structure, homodimer. Binds to stalled ribosomes, contacting rRNA.

Endonuclease that is involved in the suppression of homologous recombination and thus may have a key role in the control of bacterial genetic diversity. In terms of biological role, acts as a ribosome collision sensor, splitting the ribosome into its 2 subunits. Detects stalled/collided 70S ribosomes which it binds and splits by an ATP-hydrolysis driven conformational change. Acts upstream of the ribosome quality control system (RQC), a ribosome-associated complex that mediates the extraction of incompletely synthesized nascent chains from stalled ribosomes and their subsequent degradation. Probably generates substrates for RQC. The sequence is that of Endonuclease MutS2 from Borreliella burgdorferi (strain ATCC 35210 / DSM 4680 / CIP 102532 / B31) (Borrelia burgdorferi).